An 82-amino-acid polypeptide reads, in one-letter code: Ranatensin (82 aa).

A signal peptide spans 1–27; sequence MTTIPAIGILPIDFLTILLLFSFISHS. Positions 28–47 are excised as a propeptide; the sequence is VCVEFAEDAGELDKSNAFRR. Methionine 58 is modified (methionine amide). Positions 62–82 are excised as a propeptide; sequence SLSDDTEQATMYSSRFVESTS.

This sequence belongs to the bombesin/neuromedin-B/ranatensin family. As to expression, expressed by the skin glands.

The protein resides in the secreted. In Lithobates pipiens (Northern leopard frog), this protein is Ranatensin.